Consider the following 353-residue polypeptide: Melanin-concentrating hormone receptor 1 (353 aa).

Residues 1 to 45 (MDLQASLLSTGPNASNISDGQDNFTLAGPPPRTRSVSYINIIMPS) are Extracellular-facing. N-linked (GlcNAc...) asparagine glycosylation is found at Asn13, Asn16, and Asn23. Residues 46–66 (VFGTICLLGIVGNSTVIFAVV) traverse the membrane as a helical segment. Topologically, residues 67 to 79 (KKSKLHWCSNVPD) are cytoplasmic. Residues 80–100 (IFIINLSVVDLLFLLGMPFMI) traverse the membrane as a helical segment. Residues 101–116 (HQLMGNGVWHFGETMC) are Extracellular-facing. A disulfide bond links Cys116 and Cys194. Residues 117–139 (TLITAMDANSQFTSTYILTAMAI) traverse the membrane as a helical segment. Over 140–161 (DRYLATVHPISSTKFRKPSMAT) the chain is Cytoplasmic. The helical transmembrane segment at 162 to 182 (LVICLLWALSFISITPVWLYA) threads the bilayer. The Extracellular segment spans residues 183-204 (RLIPFPGGAVGCGIRLPNPDTD). A helical transmembrane segment spans residues 205–225 (LYWFTLYQFFLAFALPFVVIT). Residues 226-256 (AAYVKILQRMTSSVAPASQRSIRLRTKRVTR) are Cytoplasmic-facing. The helical transmembrane segment at 257 to 277 (TAIAICLVFFVCWAPYYVLQL) threads the bilayer. The Extracellular segment spans residues 278–294 (TQLSISRPTLTFVYLYN). A helical transmembrane segment spans residues 295–315 (AAISLGYANSCLNPFVYIVLC). The Cytoplasmic portion of the chain corresponds to 316-353 (ETFRKRLVLSVKPAAQGQLRTVSNAQTADEERTESKGT).

This sequence belongs to the G-protein coupled receptor 1 family. Interacts with NCDN. As to expression, expressed predominantly in the brain. Expression in brain is negatively regulated by leptin. Also found in the epithelium of the tongue and kidney.

It is found in the cell membrane. Receptor for melanin-concentrating hormone, coupled to both G proteins that inhibit adenylyl cyclase and G proteins that activate phosphoinositide hydrolysis. The protein is Melanin-concentrating hormone receptor 1 of Mus musculus (Mouse).